The chain runs to 222 residues: Probable pyridoxal 5'-phosphate synthase subunit SNO2 (222 aa).

58-60 (GES) is an L-glutamine binding site. Catalysis depends on Cys-91, which acts as the Nucleophile. Residues Arg-120 and 151 to 152 (IR) contribute to the L-glutamine site. Catalysis depends on charge relay system residues His-197 and Glu-199.

It belongs to the glutaminase PdxT/SNO family.

It catalyses the reaction aldehydo-D-ribose 5-phosphate + D-glyceraldehyde 3-phosphate + L-glutamine = pyridoxal 5'-phosphate + L-glutamate + phosphate + 3 H2O + H(+). The enzyme catalyses L-glutamine + H2O = L-glutamate + NH4(+). Its pathway is cofactor biosynthesis; pyridoxal 5'-phosphate biosynthesis. Catalyzes the hydrolysis of glutamine to glutamate and ammonia as part of the biosynthesis of pyridoxal 5'-phosphate. The resulting ammonia molecule is channeled to the active site of a SNZ isoform. The sequence is that of Probable pyridoxal 5'-phosphate synthase subunit SNO2 (SNO2) from Saccharomyces cerevisiae (strain ATCC 204508 / S288c) (Baker's yeast).